Reading from the N-terminus, the 432-residue chain is Amino acid transporter ANT1 (432 aa).

The disordered stretch occupies residues 1 to 30 (MAIKDLTATTGDSSLPLIKSPPSETTGGDR). The Cytoplasmic portion of the chain corresponds to 1–35 (MAIKDLTATTGDSSLPLIKSPPSETTGGDRTSALQ). A helical membrane pass occupies residues 36-56 (TLGNIIVSIVGTGVLGLPYAF). Over 57-62 (RIAGWL) the chain is Lumenal. Residues 63–83 (AGSLGVIIVGFATYYCMLLLI) form a helical membrane-spanning segment. The Cytoplasmic segment spans residues 84-115 (QCRDKLESEEGEEESKTYGDLGFKCMGTKGRY). The helical transmembrane segment at 116 to 136 (LTEFLIFTAQCGGSVAYLVFI) threads the bilayer. Over 137–147 (GRNLSSIFSSY) the chain is Lumenal. Residues 148 to 168 (GLSMVSFILILVPIEVGLSWI) form a helical membrane-spanning segment. Over 169–172 (TSLS) the chain is Cytoplasmic. Residues 173-193 (ALSPFSIFADICNIIAMCFVV) traverse the membrane as a helical segment. Over 194-219 (KENVEMVIEGDFSFSDRTAISSTIGG) the chain is Lumenal. A helical transmembrane segment spans residues 220–240 (LPFAGGVAVFCFEGFAMTLAL). At 241 to 256 (ESSMREREAFPKLLAK) the chain is on the cytoplasmic side. Residues 257–277 (VLAGITFVYVLFGFCGYMAYG) traverse the membrane as a helical segment. The Lumenal portion of the chain corresponds to 278–292 (DQTKDIITLNLPNNW). Residues 293 to 313 (SAIAVQIGLCVGLTFTFPIMV) form a helical membrane-spanning segment. Topologically, residues 314–353 (HPLNEIIEQKLKRIDWLQKHHNGYSNETGSVSKFAIFTTR) are cytoplasmic. Residues 354–374 (TLLVVGLAAIASLVPGFGTFA) form a helical membrane-spanning segment. Over 375 to 379 (SLVGS) the chain is Lumenal. A helical transmembrane segment spans residues 380–400 (TLCALISFVLPASYHLTLLGP). The Cytoplasmic segment spans residues 401–410 (SLNVWNKSID). Residues 411-431 (VFIVICGLIFAVYGTYNTIVG) form a helical membrane-spanning segment. A topological domain (lumenal) is located at residue Val-432.

The protein belongs to the amino acid/polyamine transporter 2 family. Amino acid/auxin permease (AAAP) (TC 2.A.18.8) subfamily. Ubiquitous. Highly expressed in flowers and cauline leaves and at lower levels in stems, leaves and roots.

The protein resides in the endoplasmic reticulum membrane. Translocates aromatic and neutral amino acids such as tyrosine, tryptophan, phenylalanine, histidine, proline, leucine, valine, glutamine, as well as arginine. Transports the auxins indole-3-acetic acid (IAA) and 2,4-dichlorophenoxyacetic acid (2,4-D). The sequence is that of Amino acid transporter ANT1 from Arabidopsis thaliana (Mouse-ear cress).